The following is a 189-amino-acid chain: Adenylate kinase (189 aa).

11–16 (GSGKGT) is a binding site for ATP. The segment at 31–60 (STGDVLRAEIKNGTELGKTAKGYIDQGQLI) is NMP. Residues Thr32, Arg37, 58–60 (QLI), 86–89 (GFPR), and Gln93 contribute to the AMP site. The tract at residues 127-137 (KRGKDSGRADD) is LID. Residue Arg128 participates in ATP binding. AMP is bound by residues Arg134 and Arg145. Gly173 serves as a coordination point for ATP.

This sequence belongs to the adenylate kinase family. As to quaternary structure, monomer.

It localises to the cytoplasm. The catalysed reaction is AMP + ATP = 2 ADP. It participates in purine metabolism; AMP biosynthesis via salvage pathway; AMP from ADP: step 1/1. Catalyzes the reversible transfer of the terminal phosphate group between ATP and AMP. Plays an important role in cellular energy homeostasis and in adenine nucleotide metabolism. The protein is Adenylate kinase of Bacteroides thetaiotaomicron (strain ATCC 29148 / DSM 2079 / JCM 5827 / CCUG 10774 / NCTC 10582 / VPI-5482 / E50).